The following is a 355-amino-acid chain: Glycerol-3-phosphate dehydrogenase [NAD(P)+] (355 aa).

NADPH is bound by residues Ser-14, Trp-15, Arg-35, and Lys-117. Lys-117, Gly-147, and Ser-149 together coordinate sn-glycerol 3-phosphate. Ala-151 serves as a coordination point for NADPH. Residues Lys-202, Asp-255, Ser-265, Arg-266, and Asn-267 each coordinate sn-glycerol 3-phosphate. Lys-202 functions as the Proton acceptor in the catalytic mechanism. Arg-266 lines the NADPH pocket. Ile-290 and Glu-292 together coordinate NADPH.

Belongs to the NAD-dependent glycerol-3-phosphate dehydrogenase family.

It localises to the cytoplasm. The catalysed reaction is sn-glycerol 3-phosphate + NAD(+) = dihydroxyacetone phosphate + NADH + H(+). It carries out the reaction sn-glycerol 3-phosphate + NADP(+) = dihydroxyacetone phosphate + NADPH + H(+). It participates in membrane lipid metabolism; glycerophospholipid metabolism. Its function is as follows. Catalyzes the reduction of the glycolytic intermediate dihydroxyacetone phosphate (DHAP) to sn-glycerol 3-phosphate (G3P), the key precursor for phospholipid synthesis. The chain is Glycerol-3-phosphate dehydrogenase [NAD(P)+] from Lawsonia intracellularis (strain PHE/MN1-00).